A 93-amino-acid polypeptide reads, in one-letter code: YcgL domain-containing protein VIBHAR_01387 (93 aa).

The YcgL domain maps to 1-84 (MLCSIYKSSR…PPENLLEKYK (84 aa)).

The sequence is that of YcgL domain-containing protein VIBHAR_01387 from Vibrio campbellii (strain ATCC BAA-1116).